The following is a 101-amino-acid chain: uncharacterized protein (101 aa).

Positions 1 to 27 (MQLTGSIYPWFTAYALLKSTLMELINS) are cleaved as a signal peptide. The next 2 membrane-spanning stretches (helical) occupy residues 42–64 (LVPYWLSIRLSLLYFKLTEAISF) and 79–98 (TFVFGYIVNCFFIIHLNTFL).

Its subcellular location is the cytoplasm. It localises to the nucleus membrane. This is an uncharacterized protein from Schizosaccharomyces pombe (strain 972 / ATCC 24843) (Fission yeast).